The sequence spans 505 residues: Glycerol kinase (505 aa).

Threonine 17 serves as a coordination point for ADP. Residues threonine 17, threonine 18, and serine 19 each contribute to the ATP site. Position 17 (threonine 17) interacts with sn-glycerol 3-phosphate. Arginine 21 contributes to the ADP binding site. Sn-glycerol 3-phosphate contacts are provided by arginine 87, glutamate 88, tyrosine 139, and aspartate 250. The glycerol site is built by arginine 87, glutamate 88, tyrosine 139, aspartate 250, and glutamine 251. Residues threonine 272 and glycine 315 each coordinate ADP. The ATP site is built by threonine 272, glycine 315, glutamine 319, and glycine 416. The ADP site is built by glycine 416 and asparagine 420.

Belongs to the FGGY kinase family.

It catalyses the reaction glycerol + ATP = sn-glycerol 3-phosphate + ADP + H(+). The protein operates within polyol metabolism; glycerol degradation via glycerol kinase pathway; sn-glycerol 3-phosphate from glycerol: step 1/1. With respect to regulation, inhibited by fructose 1,6-bisphosphate (FBP). Its function is as follows. Key enzyme in the regulation of glycerol uptake and metabolism. Catalyzes the phosphorylation of glycerol to yield sn-glycerol 3-phosphate. The protein is Glycerol kinase of Azotobacter vinelandii (strain DJ / ATCC BAA-1303).